The chain runs to 307 residues: Aspartate carbamoyltransferase catalytic subunit (307 aa).

Carbamoyl phosphate contacts are provided by arginine 59 and threonine 60. Residue lysine 87 coordinates L-aspartate. Carbamoyl phosphate contacts are provided by arginine 109, histidine 137, and glutamine 140. L-aspartate is bound by residues arginine 173 and arginine 223. Glycine 266 and proline 267 together coordinate carbamoyl phosphate.

Belongs to the aspartate/ornithine carbamoyltransferase superfamily. ATCase family. In terms of assembly, heterododecamer (2C3:3R2) of six catalytic PyrB chains organized as two trimers (C3), and six regulatory PyrI chains organized as three dimers (R2).

It catalyses the reaction carbamoyl phosphate + L-aspartate = N-carbamoyl-L-aspartate + phosphate + H(+). It functions in the pathway pyrimidine metabolism; UMP biosynthesis via de novo pathway; (S)-dihydroorotate from bicarbonate: step 2/3. Catalyzes the condensation of carbamoyl phosphate and aspartate to form carbamoyl aspartate and inorganic phosphate, the committed step in the de novo pyrimidine nucleotide biosynthesis pathway. The polypeptide is Aspartate carbamoyltransferase catalytic subunit (Helicobacter pylori (strain Shi470)).